We begin with the raw amino-acid sequence, 111 residues long: Universal stress protein B (111 aa).

2 consecutive transmembrane segments (helical) span residues 1-21 (MISTVALFWALFLVCVINMAR) and 90-110 (FILTSALCGLVIISLIGLMIW).

It belongs to the universal stress protein B family.

It is found in the cell inner membrane. The protein is Universal stress protein B of Cronobacter sakazakii (strain ATCC BAA-894) (Enterobacter sakazakii).